The following is an 879-amino-acid chain: Aminopeptidase M1 (879 aa).

Residues 98–205 (HGVGVLKLGF…MSTYLVAIVV (108 aa)) are required for membrane association. Residues Glu138 and 271–275 (GAMEN) each bind substrate. His307 provides a ligand contact to Zn(2+). Catalysis depends on Glu308, which acts as the Proton acceptor. Zn(2+) is bound by residues His311 and Glu330. A Dileucine internalization motif motif is present at residues 728–729 (LL).

Belongs to the peptidase M1 family. Homodimer. Interacts with N-1-naphthylphthalamic acid (NPA). The cofactor is Zn(2+). Ubiquitous with preferential expression in 5 days-old seedlings, roots, young flowers, upper inflorescence stems, and rosette leaves.

It is found in the membrane. The protein resides in the microsome membrane. Its subcellular location is the cytoplasm. The enzyme catalyses Release of an N-terminal amino acid, Xaa-|-Yaa- from a peptide, amide or arylamide. Xaa is preferably Ala, but may be most amino acids including Pro (slow action). When a terminal hydrophobic residue is followed by a prolyl residue, the two may be released as an intact Xaa-Pro dipeptide.. Functionally, metallopeptidase that binds to the auxin transport inhibitor N-1-naphthylphthalamic acid (NPA). Required for embryonic and seedling development as well as cell cycle progression. Homodimerization is required to proper localization and activity. May play a negative role in the regulation of PIN auxin transport proteins. This is Aminopeptidase M1 (APM1) from Arabidopsis thaliana (Mouse-ear cress).